A 320-amino-acid polypeptide reads, in one-letter code: Ferrochelatase (320 aa).

The Fe cation site is built by His-194 and Glu-275.

This sequence belongs to the ferrochelatase family. In terms of assembly, monomer.

The protein localises to the cytoplasm. The catalysed reaction is heme b + 2 H(+) = protoporphyrin IX + Fe(2+). Its pathway is porphyrin-containing compound metabolism; protoheme biosynthesis; protoheme from protoporphyrin-IX: step 1/1. In terms of biological role, catalyzes the ferrous insertion into protoporphyrin IX. In Shigella boydii serotype 4 (strain Sb227), this protein is Ferrochelatase.